Consider the following 649-residue polypeptide: Threonine--tRNA ligase (649 aa).

A TGS domain is found at 1-63; that stretch reads MSSIKITFPD…KEDGSIEIIT (63 aa). The catalytic stretch occupies residues 245 to 543; it reads DHRVIGNELD…LTEMYKGAFP (299 aa). Positions 339, 390, and 520 each coordinate Zn(2+).

Belongs to the class-II aminoacyl-tRNA synthetase family. In terms of assembly, homodimer. Zn(2+) is required as a cofactor.

It localises to the cytoplasm. It catalyses the reaction tRNA(Thr) + L-threonine + ATP = L-threonyl-tRNA(Thr) + AMP + diphosphate + H(+). Functionally, catalyzes the attachment of threonine to tRNA(Thr) in a two-step reaction: L-threonine is first activated by ATP to form Thr-AMP and then transferred to the acceptor end of tRNA(Thr). Also edits incorrectly charged L-seryl-tRNA(Thr). This chain is Threonine--tRNA ligase, found in Ligilactobacillus salivarius (strain UCC118) (Lactobacillus salivarius).